Consider the following 554-residue polypeptide: Carboxylesterase 1C (554 aa).

The first 18 residues, 1-18, serve as a signal peptide directing secretion; that stretch reads MWLHALVWASLAVCPILG. N-linked (GlcNAc...) asparagine glycosylation is present at Asn79. The cysteines at positions 87 and 116 are disulfide-linked. Ser221 acts as the Acyl-ester intermediate in catalysis. Cys273 and Cys284 are oxidised to a cystine. Asn274 and Asn304 each carry an N-linked (GlcNAc...) asparagine glycan. Glu342 functions as the Charge relay system in the catalytic mechanism. Asn377 carries N-linked (GlcNAc...) asparagine glycosylation. His455 (charge relay system) is an active-site residue. Ser473 bears the Phosphoserine mark. Asn478 carries an N-linked (GlcNAc...) asparagine glycan. The Prevents secretion from ER signature appears at 551-554; the sequence is TEHK.

The protein belongs to the type-B carboxylesterase/lipase family. As to expression, expressed in lung, kidney and liver.

The protein localises to the endoplasmic reticulum lumen. The enzyme catalyses a carboxylic ester + H2O = an alcohol + a carboxylate + H(+). Involved in the detoxification of xenobiotics and in the activation of ester and amide prodrugs. Involved in the extracellular metabolism of lung surfactant. The protein is Carboxylesterase 1C (Ces1c) of Mus musculus (Mouse).